Here is a 490-residue protein sequence, read N- to C-terminus: Chromosomal replication initiator protein DnaA (490 aa).

The tract at residues 1–91 is domain I, interacts with DnaA modulators; it reads MTMKGGVASQ…GELWAAHDAT (91 aa). The segment at 91–147 is domain II; that stretch reads TGRRIDLKSRLEFEAAAGAYVEATPKAVAAEPIEIVLPVSTDAPTVVAPSAKSPRTQ. Residues 148 to 370 form a domain III, AAA+ region region; sequence GLQERFTFET…GALNTLSARA (223 aa). The ATP site is built by G192, G194, K195, and T196. Residues 371-490 form a domain IV, binds dsDNA region; that stretch reads GEGLSRMTLD…LETLTRKLRG (120 aa).

This sequence belongs to the DnaA family. In terms of assembly, oligomerizes as a right-handed, spiral filament on DNA at oriC.

It is found in the cytoplasm. Functionally, plays an essential role in the initiation and regulation of chromosomal replication. ATP-DnaA binds to the origin of replication (oriC) to initiate formation of the DNA replication initiation complex once per cell cycle. Binds the DnaA box (a 9 base pair repeat at the origin) and separates the double-stranded (ds)DNA. Forms a right-handed helical filament on oriC DNA; dsDNA binds to the exterior of the filament while single-stranded (ss)DNA is stabiized in the filament's interior. The ATP-DnaA-oriC complex binds and stabilizes one strand of the AT-rich DNA unwinding element (DUE), permitting loading of DNA polymerase. After initiation quickly degrades to an ADP-DnaA complex that is not apt for DNA replication. Binds acidic phospholipids. This Caulobacter vibrioides (strain ATCC 19089 / CIP 103742 / CB 15) (Caulobacter crescentus) protein is Chromosomal replication initiator protein DnaA.